A 317-amino-acid chain; its full sequence is MRFSTQMMYQQNMRGITNSQAEWMKYGEQMSTGKRVVNPSDDPIAASQAVVLSQAQAQNSQYTLARTFATQKVSLEESVLSQVTTAIQNAQEKIVYASNGTLSDDDRASLATDIQGLRDQLLNLANTTDGNGRYIFAGYKTETAPFSEEKGKYVGGAESIKQQVDASRSMVIGHTGDKIFDSITSNAVAEPDGSASETNLFAMLDSAIAALKTPVADSEADKETAAAALDKTNRGLKNSLNNVLTVRAELGTQLNELESLDSLGSDRALGQTQQMSDLVDVDWNATISSYIMQQTALQASYKAFTDMQGLSLFQLSK.

Belongs to the bacterial flagellin family.

It is found in the secreted. It localises to the bacterial flagellum. In Escherichia coli (strain K12), this protein is Flagellar hook-associated protein 3 (flgL).